The following is a 91-amino-acid chain: Small ribosomal subunit protein uS19 (91 aa).

This sequence belongs to the universal ribosomal protein uS19 family.

Protein S19 forms a complex with S13 that binds strongly to the 16S ribosomal RNA. This Aromatoleum aromaticum (strain DSM 19018 / LMG 30748 / EbN1) (Azoarcus sp. (strain EbN1)) protein is Small ribosomal subunit protein uS19.